The primary structure comprises 430 residues: MKTTIKQAKDHLNQDVTIGAWLTNKRSSGKIAFLQLRDGTGFMQGVVVKSEVDEEVFKLAKEITQESSLYVTGTITEDNRSDLGYEMQVKSIEVISEAHDYPITPKNHGTEFLMDHRHLWLRSKKQHAVMKIRNEVIRATYEFFNKDGFTKVDPPILTASAPEGTSELFHTKYFDQDAFLSQSGQLYLEAAAMAHGKVFSFGPTFRAEKSKTRRHLIEFWMIEGEMAFINHAESLEIQEQYVTHVVKSVLENCKLELKILERDTSKLEKVATPFPRISYDDAIEFLKSEGFDDIEWGEDFGAPHETAIANHYDLPVFITNYPTKIKPFYMQPNPENEETVLCADLIAPEGYGEIIGGSERVDDLELLEQRVKEHGLDEEAYSYYLDLRRYGSVPHCGFGLGLERTVAWISGVEHVRETAPFPRLLNRLYP.

The protein belongs to the class-II aminoacyl-tRNA synthetase family. Homodimer.

It is found in the cytoplasm. It carries out the reaction tRNA(Asn) + L-asparagine + ATP = L-asparaginyl-tRNA(Asn) + AMP + diphosphate + H(+). This Staphylococcus aureus (strain MSSA476) protein is Asparagine--tRNA ligase.